The chain runs to 129 residues: MSHLQNLLLDTLLGTKHVDSAALIKLQEKTLCVTSPGFSVMPSDVRTLLNGFAKNPLLTRREGLYFKEKDYKCVRADDYSLYAKNENTGVVVVKTNMYLVVATYTAGMYPSVCVEATEKLGEYLRKKGN.

The protein belongs to the profilin family. In terms of tissue distribution, expressed in testis, in germ cells in seminiferous tubules (at protein level).

Its subcellular location is the cytoplasm. In terms of biological role, involved in male fertility. Required for manchette development and acrosome biogenesis during spermiogenesis. Binds in vitro to phospholipids, including phosphatidylinositol 3-phosphate (PtdIns(3)P), phosphatidylinositol 4,5-bisphosphate (PtdIns(4,5)P2), phosphatidylinositol 4-phosphate (PtdIns(4)P) and phosphatidic acid (PA). Contrary to other profilin family members, does not bind to actin in vitro. In Mus musculus (Mouse), this protein is Profilin-4 (Pfn4).